The sequence spans 351 residues: Protein EXPRESSION OF TERPENOIDS 1 (351 aa).

The disordered stretch occupies residues 1–23 (MANFFSLGGNQEQQHQEISSSQA). A compositionally biased stretch (low complexity) spans 11–22 (QEQQHQEISSSQ). Zn(2+) contacts are provided by C129, C132, C140, C145, C149, and C156. Positions 129–156 (CQDCGNQAKKDCQHMRCRTCCKSRGFQC) form a DNA-binding region, zn(2)-C6 fungal-type; degenerate. Residues 170–219 (RRERQQQLAALQQQQQGHNNNNNNHKNKRQREDPSASSLVSTRLPSNTNG) form a disordered region. The segment covering 175-193 (QQLAALQQQQQGHNNNNNN) has biased composition (low complexity). Positions 204 to 219 (SASSLVSTRLPSNTNG) are enriched in polar residues. A Required for homo- and heterodimerization motif is present at residues 258-261 (IGGH). Positions 286-320 (TSSGGSAGGVQHHHHNSAAVATATTTSGGDATAAG) are disordered. The segment covering 303-320 (AAVATATTTSGGDATAAG) has biased composition (low complexity).

Belongs to the SHI protein family. In terms of assembly, forms homodimers and heterodimers with LRP1.

The protein localises to the nucleus. Functionally, transcription activator involved in the transcriptional regulation of terpene biosynthesis in glandular trichomes. Binds to the promoter of the linalool synthase TPS5 and promotes TPS5 gene transactivation. Acts synergistically with MYC1 in the transactivation of TPS5. The protein is Protein EXPRESSION OF TERPENOIDS 1 of Solanum lycopersicum (Tomato).